We begin with the raw amino-acid sequence, 240 residues long: MAEPQEKSLDDFFAKRDKKKKKDKGVSGSAAGSRGSARPPDGAPSSSSSMSGAGKGVKKEKSGKSDNPDQLQEKEDDEWKEFEQKEVDYSGLRIQSLQLSNEKEDDENEKKEEQGADWEETGGYGTDKSSGPWNKTSQAQAPISAVTEAPEPVHTGGVYRPPAARASVSTRKPQGPPEIYSDTQFPSLQATAKHTESRREKEMEKTFEMVKHKNRARDEATKNQALRLQLDNQYAVLGEQ.

Residues 1 to 15 are compositionally biased toward basic and acidic residues; the sequence is MAEPQEKSLDDFFAK. Residues 1 to 204 form a disordered region; it reads MAEPQEKSLD…TESRREKEME (204 aa). The residue at position 2 (Ala2) is an N-acetylalanine. A compositionally biased stretch (low complexity) spans 27–52; sequence SGSAAGSRGSARPPDGAPSSSSSMSG. Basic and acidic residues predominate over residues 57-73; that stretch reads VKKEKSGKSDNPDQLQE. 2 stretches are compositionally biased toward polar residues: residues 127–141 and 181–192; these read DKSSGPWNKTSQAQA and SDTQFPSLQATA. Positions 193–204 are enriched in basic and acidic residues; that stretch reads KHTESRREKEME.

Belongs to the CDV3 family.

It is found in the cytoplasm. The sequence is that of Protein CDV3 homolog A (cdv3-a) from Xenopus laevis (African clawed frog).